A 113-amino-acid polypeptide reads, in one-letter code: MSNIQIPLIFTDAAAKKVKSLIEGEDNPNLRLRVYITGGGCSGFQYGFTFDDQINEGDLTIENQNVGLVVDPMSLQYLIGGTVDYTEGLDGSRFVVQNPNASSTCGCGSSFSI.

Iron-sulfur cluster-binding residues include C41, C105, and C107.

It belongs to the HesB/IscA family. In terms of assembly, homodimer. Requires iron-sulfur cluster as cofactor.

In terms of biological role, required for insertion of 4Fe-4S clusters for at least IspG. This is Iron-sulfur cluster insertion protein ErpA from Actinobacillus pleuropneumoniae serotype 5b (strain L20).